The sequence spans 93 residues: uncharacterized protein (93 aa).

An N-terminal signal peptide occupies residues 1–11; sequence MALMVLMALVG. Cys-12 carries N-palmitoyl cysteine lipidation. Residue Cys-12 is the site of S-diacylglycerol cysteine attachment.

Its subcellular location is the cell membrane. This is an uncharacterized protein from Escherichia coli O6:K15:H31 (strain 536 / UPEC).